We begin with the raw amino-acid sequence, 110 residues long: Nucleoid-associated protein Mvan_5528 (110 aa).

The protein belongs to the YbaB/EbfC family. As to quaternary structure, homodimer.

It localises to the cytoplasm. The protein resides in the nucleoid. Functionally, binds to DNA and alters its conformation. May be involved in regulation of gene expression, nucleoid organization and DNA protection. This Mycolicibacterium vanbaalenii (strain DSM 7251 / JCM 13017 / BCRC 16820 / KCTC 9966 / NRRL B-24157 / PYR-1) (Mycobacterium vanbaalenii) protein is Nucleoid-associated protein Mvan_5528.